Here is a 103-residue protein sequence, read N- to C-terminus: Salivary thrombin inhibitor anophelin (103 aa).

The N-terminal stretch at 1–21 is a signal peptide; that stretch reads MASKLFVLAFLCLALVVVVQS. Residues 24–103 are disordered; sequence QYARGDVPTY…PAASSSESDE (80 aa). The segment at 56–68 is blocks exosite I of host thrombin; that stretch reads EEFDPSLLEEHAD. The segment at 74–77 is blocks active site cleft of host thrombin in a reverse direction compared to substrates; the sequence is DPGR. Residues 91–103 are compositionally biased toward low complexity; it reads ASAPAASSSESDE.

This sequence belongs to the anophelin family. As to quaternary structure, interacts with human F2 (thrombin); the interaction results in thrombin inhibition. As to expression, female salivary gland (at protein level). Not detected in female midgut, head, carcass and male tissues (at protein level).

It localises to the secreted. Its activity is regulated as follows. Increasing concentration of NaCl decreases affinity for thrombin. Salivary protein with anticoagulant activity that inhibits host thrombin (F2); binds to the proteinase in a reverse orientation (opposite to substrates). This is Salivary thrombin inhibitor anophelin from Anopheles gambiae (African malaria mosquito).